The sequence spans 318 residues: MEKLNLVSLPHFVSVENLSAEEVEALINRAEYFKNGGATPRLTQPVYISNMFFEDSSRTHTSFEMAERKLGLTVIPFDPAHSSVNKGETLYDTSLIMDAVGVNIEVIRHSQNEYYQDLIHPKKHQHLNIGVINAGDGSGQHPSQCLLDMMTIHEHFGHFKGLKVAIVGDITNSRVAKSNMELLTRLGAEVYFSGPEYWYSSEYDKYGKYEKLDKLIPEMDVMMLLRVQHERHSDDPNEKNFDAQAYHEEYGINHKRYQELKPDTIIMHPGPINHDVELSGDLVESDKCMFTRQMQNGVFMRMAMIEAVLRGRKLGGLN.

Carbamoyl phosphate contacts are provided by Arg58 and Thr59. Residue Lys86 participates in L-aspartate binding. Arg108, His141, and Gln144 together coordinate carbamoyl phosphate. L-aspartate-binding residues include Arg174 and Arg226. Carbamoyl phosphate-binding residues include Gly270 and Pro271.

The protein belongs to the aspartate/ornithine carbamoyltransferase superfamily. ATCase family. As to quaternary structure, heterododecamer (2C3:3R2) of six catalytic PyrB chains organized as two trimers (C3), and six regulatory PyrI chains organized as three dimers (R2).

It catalyses the reaction carbamoyl phosphate + L-aspartate = N-carbamoyl-L-aspartate + phosphate + H(+). The protein operates within pyrimidine metabolism; UMP biosynthesis via de novo pathway; (S)-dihydroorotate from bicarbonate: step 2/3. Functionally, catalyzes the condensation of carbamoyl phosphate and aspartate to form carbamoyl aspartate and inorganic phosphate, the committed step in the de novo pyrimidine nucleotide biosynthesis pathway. The sequence is that of Aspartate carbamoyltransferase catalytic subunit from Lactobacillus gasseri (strain ATCC 33323 / DSM 20243 / BCRC 14619 / CIP 102991 / JCM 1131 / KCTC 3163 / NCIMB 11718 / NCTC 13722 / AM63).